A 314-amino-acid chain; its full sequence is Methionyl-tRNA formyltransferase (314 aa).

Residue 113–116 participates in (6S)-5,6,7,8-tetrahydrofolate binding; that stretch reads SLLP.

This sequence belongs to the Fmt family.

It carries out the reaction L-methionyl-tRNA(fMet) + (6R)-10-formyltetrahydrofolate = N-formyl-L-methionyl-tRNA(fMet) + (6S)-5,6,7,8-tetrahydrofolate + H(+). In terms of biological role, attaches a formyl group to the free amino group of methionyl-tRNA(fMet). The formyl group appears to play a dual role in the initiator identity of N-formylmethionyl-tRNA by promoting its recognition by IF2 and preventing the misappropriation of this tRNA by the elongation apparatus. This Chlorobaculum tepidum (strain ATCC 49652 / DSM 12025 / NBRC 103806 / TLS) (Chlorobium tepidum) protein is Methionyl-tRNA formyltransferase.